The sequence spans 116 residues: Large ribosomal subunit protein uL22c (116 aa).

Belongs to the universal ribosomal protein uL22 family. Part of the 50S ribosomal subunit.

Its subcellular location is the plastid. It localises to the chloroplast. Functionally, this protein binds specifically to 23S rRNA. Its function is as follows. The globular domain of the protein is located near the polypeptide exit tunnel on the outside of the subunit, while an extended beta-hairpin is found that lines the wall of the exit tunnel in the center of the 70S ribosome. This chain is Large ribosomal subunit protein uL22c (rpl22), found in Psilotum nudum (Whisk fern).